A 264-amino-acid polypeptide reads, in one-letter code: Exosome complex component Rrp4 (264 aa).

In terms of domain architecture, S1 motif spans Gly-65–Lys-137. The KH domain maps to Arg-147–Ile-206. Residues Ser-244 to Asp-258 show a composition bias toward acidic residues. The segment at Ser-244 to Pro-264 is disordered.

It belongs to the RRP4 family. As to quaternary structure, component of the archaeal exosome complex. Forms a trimer of Rrp4 and/or Csl4 subunits. The trimer associates with a hexameric ring-like arrangement composed of 3 Rrp41-Rrp42 heterodimers.

It is found in the cytoplasm. In terms of biological role, non-catalytic component of the exosome, which is a complex involved in RNA degradation. Increases the RNA binding and the efficiency of RNA degradation. Confers strong poly(A) specificity to the exosome. The protein is Exosome complex component Rrp4 of Pyrococcus furiosus (strain ATCC 43587 / DSM 3638 / JCM 8422 / Vc1).